Here is a 468-residue protein sequence, read N- to C-terminus: MVLSDILFSIYEHREKSPVFSWFAYLLRILDWIIQFLSFGLIPSIGGDLYDLVDNGLFKFVLDRNIQKKQNQLYDKFRLGTVKMCLVFDGELTKKLLLDNSIRRGGLYNLLTKFFGKGIFTSNIHSRWMKQRKAIFKLFSPQNLIQITPELTTSMFEELDRLITIKKDLDLVTVLSLIGLVGFCKVIFGVDVTDMSEELIEPLNDLLIYINGAVEPVLITADPSYRRFITNKKFVHNWMRKLIDKARKSENCFEIMRQQLDDIGSDDETELIEFILSVVLGGHETTARLMLGIIYSVCHNKEIIEKLNNETDEYPKGDYINLKKRPYLNNIIKEGTRLFPPVWLLSREAKNDTTIDNHFFKKGTQFLISPLIILRDYNVWGSNAEKFDPERFSNMDPKSKASKLYIPFIVGSEDCPGKKFAILESAIVVSKLFKEYEITVLKHKLNPMSAGTFRLSDKLPVSIKKLKN.

A run of 2 helical transmembrane segments spans residues 22-42 (WFAY…FGLI) and 172-192 (VTVL…GVDV). C415 lines the heme pocket.

This sequence belongs to the cytochrome P450 family. It depends on heme as a cofactor.

It localises to the host membrane. The protein localises to the virion. This chain is Cytochrome P450-like protein L532, found in Acanthamoeba polyphaga mimivirus (APMV).